The sequence spans 602 residues: Arginine--tRNA ligase (602 aa).

Residues 124–134 carry the 'HIGH' region motif; that stretch reads ANPTGPVHVGR.

It belongs to the class-I aminoacyl-tRNA synthetase family.

The protein localises to the cytoplasm. The catalysed reaction is tRNA(Arg) + L-arginine + ATP = L-arginyl-tRNA(Arg) + AMP + diphosphate. The protein is Arginine--tRNA ligase of Halorubrum lacusprofundi (strain ATCC 49239 / DSM 5036 / JCM 8891 / ACAM 34).